The chain runs to 239 residues: Cysteine-rich venom protein natrin-1 (239 aa).

The N-terminal stretch at 1-18 is a signal peptide; the sequence is MIAFSLLCFAAVLQQSFG. One can recognise an SCP domain in the interval 37 to 165; the sequence is VDLHNSLRRR…AWSYFYVCQY (129 aa). 8 cysteine pairs are disulfide-bonded: Cys-74/Cys-152, Cys-91/Cys-166, Cys-147/Cys-163, Cys-185/Cys-192, Cys-188/Cys-197, Cys-201/Cys-234, Cys-210/Cys-228, and Cys-219/Cys-232. The 34-residue stretch at 201-234 folds into the ShKT domain; that stretch reads CTIYNKLTNCDSLLKQSSCQDDWIKSNCPASCFC.

Expressed by the venom gland.

The protein resides in the secreted. In terms of biological role, inhibits calcium-activated potassium channels (KCa1.1/KCNMA1), voltage-gated potassium channel Kv1.3/KCNA3, and the calcium release channel/ryanodine receptor (RyR). Binds specifically to type 1 RyR (RyR1) from skeletal muscle. Inhibit both the binding of ryanodine to RyR1, and RyR1's calcium-channel activity. Inhibits carbachol-induced muscle contraction and weakly blocks muscle contraction evoked by potassium. This is Cysteine-rich venom protein natrin-1 from Naja atra (Chinese cobra).